A 200-amino-acid chain; its full sequence is Recombination protein RecR (200 aa).

Residues 57 to 72 (CRQCRTLTEQELCPQC) form a C4-type zinc finger. Residues 80-175 (TQLCVVEGPT…VASRIAHGVP (96 aa)) enclose the Toprim domain.

This sequence belongs to the RecR family.

In terms of biological role, may play a role in DNA repair. It seems to be involved in an RecBC-independent recombinational process of DNA repair. It may act with RecF and RecO. This chain is Recombination protein RecR, found in Pseudomonas putida (strain ATCC 700007 / DSM 6899 / JCM 31910 / BCRC 17059 / LMG 24140 / F1).